The following is a 211-amino-acid chain: Endo-1,4-beta-xylanase 6 (211 aa).

Residues 1–16 (MKVTAAFAGLLVTALA) form the signal peptide. Positions 19-210 (APEPVLVSRS…GAGSASVTIS (192 aa)) constitute a GH11 domain. The active-site Nucleophile is the glutamate 106. Catalysis depends on glutamate 197, which acts as the Proton donor.

Belongs to the glycosyl hydrolase 11 (cellulase G) family.

The protein localises to the secreted. The enzyme catalyses Endohydrolysis of (1-&gt;4)-beta-D-xylosidic linkages in xylans.. It functions in the pathway glycan degradation; xylan degradation. Its function is as follows. Endo-1,4-beta-xylanase involved in the hydrolysis of xylan, a major structural heterogeneous polysaccharide found in plant biomass representing the second most abundant polysaccharide in the biosphere, after cellulose. The protein is Endo-1,4-beta-xylanase 6 (XYN6) of Aspergillus niger.